We begin with the raw amino-acid sequence, 457 residues long: Exodeoxyribonuclease 7 large subunit (457 aa).

It belongs to the XseA family. As to quaternary structure, heterooligomer composed of large and small subunits.

The protein localises to the cytoplasm. The enzyme catalyses Exonucleolytic cleavage in either 5'- to 3'- or 3'- to 5'-direction to yield nucleoside 5'-phosphates.. Its function is as follows. Bidirectionally degrades single-stranded DNA into large acid-insoluble oligonucleotides, which are then degraded further into small acid-soluble oligonucleotides. This Cronobacter sakazakii (strain ATCC BAA-894) (Enterobacter sakazakii) protein is Exodeoxyribonuclease 7 large subunit.